The chain runs to 142 residues: Galactose-binding lectin l-1 (142 aa).

Positions 3-134 (FVEVKNLIMK…DATVKNISVN (132 aa)) constitute a Galectin domain. 68–74 (WQEEQRD) serves as a coordination point for a beta-D-galactoside. Asn130 carries an N-linked (GlcNAc...) asparagine glycan.

As to quaternary structure, homodimer. In terms of processing, the N-terminus is blocked. As to expression, skin; highest expression in that of individuals showing resistance to infectious disease.

The protein resides in the secreted. In terms of biological role, involved in host defense at the body surface. Causes agglutination of the Gram-positive bacterium S.difficile. Possesses calcium-independent hemagglutinating activity. The protein is Galactose-binding lectin l-1 of Anguilla japonica (Japanese eel).